We begin with the raw amino-acid sequence, 906 residues long: Protein translocase subunit SecA (906 aa).

Residues glutamine 86, 104–108, and aspartate 511 each bind ATP; that span reads GEGKT. Basic and acidic residues-rich tracts occupy residues 853–865 and 877–888; these read HESVIDNNQRHDE and VRREGPKVKRND. The segment at 853-906 is disordered; it reads HESVIDNNQRHDEDEQEEAPKVQQVRREGPKVKRNDPCPCGSGKKYKQCHGKVE. Zn(2+) contacts are provided by cysteine 890, cysteine 892, cysteine 901, and histidine 902. Residues 896–906 show a composition bias toward basic residues; it reads KKYKQCHGKVE.

This sequence belongs to the SecA family. Monomer and homodimer. Part of the essential Sec protein translocation apparatus which comprises SecA, SecYEG and auxiliary proteins SecDF-YajC and YidC. Requires Zn(2+) as cofactor.

It localises to the cell inner membrane. The protein localises to the cytoplasm. The catalysed reaction is ATP + H2O + cellular proteinSide 1 = ADP + phosphate + cellular proteinSide 2.. In terms of biological role, part of the Sec protein translocase complex. Interacts with the SecYEG preprotein conducting channel. Has a central role in coupling the hydrolysis of ATP to the transfer of proteins into and across the cell membrane, serving both as a receptor for the preprotein-SecB complex and as an ATP-driven molecular motor driving the stepwise translocation of polypeptide chains across the membrane. This chain is Protein translocase subunit SecA, found in Francisella tularensis subsp. holarctica (strain FTNF002-00 / FTA).